We begin with the raw amino-acid sequence, 741 residues long: Nuclear poly(A) polymerase 4 (741 aa).

Residues 101 to 103, 113 to 116, 114 to 116, D169, K230, Y239, and 248 to 249 contribute to the ATP site; these read FGS, ADID, DID, and GV. Residues D114, D116, and D169 each contribute to the Mg(2+) site. A Nuclear localization signal motif is present at residues 485–492; it reads RRRQLPPF. Disordered stretches follow at residues 494–556 and 683–741; these read FPNG…LSPQ and YEGF…RLLT. A compositionally biased stretch (basic and acidic residues) spans 534–551; the sequence is KNDSEMMDVRPEKPEKRA. The span at 701–717 shows a compositional bias: polar residues; the sequence is LYSQSGMSEDLQSNSLV. Over residues 721–731 the composition is skewed to basic and acidic residues; the sequence is EKSEDRARSES. Positions 732–741 are enriched in polar residues; it reads FQKSQIRLLT.

The protein belongs to the poly(A) polymerase family. In terms of assembly, monomer. Forms a complex with cleavage and polyadenylation specificity factor (CPSF) subunits CFIS2, FIPS3, PAPS1, PABN1, PABN2, PABN3 and FIPS5. It depends on Mg(2+) as a cofactor. The cofactor is Mn(2+). In terms of tissue distribution, mostly expressed in flowers (very active in pollen, sepals, styles, and stigmas), cotyledons and hypocotyls, and, to a lower extent, in roots (confined to the vascular tissue in the radicle) and leaves (in the vascular tissue and leaf petioles). Barely detected in stems. Active in the primary and secondary root systems.

Its subcellular location is the nucleus. The enzyme catalyses RNA(n) + ATP = RNA(n)-3'-adenine ribonucleotide + diphosphate. Functionally, essential protein. Polymerase that creates the 3'-poly(A) tail of mRNA's. Also required for the endoribonucleolytic cleavage reaction at some polyadenylation sites. May acquire specificity through interaction with a cleavage and polyadenylation specificity factor (CPSF) at its C-terminus. This is Nuclear poly(A) polymerase 4 from Arabidopsis thaliana (Mouse-ear cress).